The following is a 459-amino-acid chain: ATP synthase subunit beta (459 aa).

148–155 contributes to the ATP binding site; sequence GGAGVGKT.

It belongs to the ATPase alpha/beta chains family. As to quaternary structure, F-type ATPases have 2 components, CF(1) - the catalytic core - and CF(0) - the membrane proton channel. CF(1) has five subunits: alpha(3), beta(3), gamma(1), delta(1), epsilon(1). CF(0) has three main subunits: a(1), b(2) and c(9-12). The alpha and beta chains form an alternating ring which encloses part of the gamma chain. CF(1) is attached to CF(0) by a central stalk formed by the gamma and epsilon chains, while a peripheral stalk is formed by the delta and b chains.

The protein resides in the cell inner membrane. The catalysed reaction is ATP + H2O + 4 H(+)(in) = ADP + phosphate + 5 H(+)(out). Produces ATP from ADP in the presence of a proton gradient across the membrane. The catalytic sites are hosted primarily by the beta subunits. This chain is ATP synthase subunit beta, found in Cellvibrio japonicus (strain Ueda107) (Pseudomonas fluorescens subsp. cellulosa).